The chain runs to 44 residues: Large ribosomal subunit protein bL36 (44 aa).

The protein belongs to the bacterial ribosomal protein bL36 family.

The sequence is that of Large ribosomal subunit protein bL36 from Pseudoalteromonas translucida (strain TAC 125).